The primary structure comprises 221 residues: Adenylate kinase (221 aa).

10 to 15 (GAGKGT) serves as a coordination point for ATP. The segment at 30–59 (STGDMLRAAVKAGTPLGLEAKRFMDAGELV) is NMP. Residues Thr31, Arg36, 57–59 (ELV), 85–88 (GFPR), and Gln92 contribute to the AMP site. Positions 122–159 (GRRSHAASGRTYHVKFNPPKVEGLDDVTGEPLIQRDDD) are LID. ATP-binding positions include Arg123 and 132-133 (TY). Residues Arg156 and Arg167 each contribute to the AMP site. Gly207 provides a ligand contact to ATP.

Belongs to the adenylate kinase family. In terms of assembly, monomer.

Its subcellular location is the cytoplasm. The catalysed reaction is AMP + ATP = 2 ADP. The protein operates within purine metabolism; AMP biosynthesis via salvage pathway; AMP from ADP: step 1/1. Functionally, catalyzes the reversible transfer of the terminal phosphate group between ATP and AMP. Plays an important role in cellular energy homeostasis and in adenine nucleotide metabolism. The protein is Adenylate kinase of Paraburkholderia xenovorans (strain LB400).